Reading from the N-terminus, the 359-residue chain is Aromatic amino acid aminotransferase (359 aa).

Basic and acidic residues predominate over residues 1–12; sequence MSETSPKLRAEL. Positions 1–21 are disordered; sequence MSETSPKLRAELEGIPTYKPG. An N6-(pyridoxal phosphate)lysine modification is found at Lys-223.

Belongs to the class-II pyridoxal-phosphate-dependent aminotransferase family. In terms of assembly, homodimer. Requires pyridoxal 5'-phosphate as cofactor.

The enzyme catalyses an aromatic L-alpha-amino acid + 2-oxoglutarate = an aromatic oxo-acid + L-glutamate. Aminotransferase that catalyzes the conversion of aromatic amino acids and 2-oxoglutarate into corresponding aromatic oxo acids and L-glutamate. The polypeptide is Aromatic amino acid aminotransferase (Streptomyces coelicolor (strain ATCC BAA-471 / A3(2) / M145)).